Reading from the N-terminus, the 50-residue chain is Large ribosomal subunit protein bL33B (50 aa).

This sequence belongs to the bacterial ribosomal protein bL33 family.

The sequence is that of Large ribosomal subunit protein bL33B (rpmG2) from Enterococcus faecalis (strain ATCC 700802 / V583).